Here is a 156-residue protein sequence, read N- to C-terminus: Small ribosomal subunit protein uS7 (156 aa).

This sequence belongs to the universal ribosomal protein uS7 family. In terms of assembly, part of the 30S ribosomal subunit. Contacts proteins S9 and S11.

In terms of biological role, one of the primary rRNA binding proteins, it binds directly to 16S rRNA where it nucleates assembly of the head domain of the 30S subunit. Is located at the subunit interface close to the decoding center, probably blocks exit of the E-site tRNA. The polypeptide is Small ribosomal subunit protein uS7 (Neisseria gonorrhoeae (strain ATCC 700825 / FA 1090)).